A 318-amino-acid polypeptide reads, in one-letter code: DNA-directed RNA polymerase subunit alpha (318 aa).

An alpha N-terminal domain (alpha-NTD) region spans residues 1–232 (MAHQRIVGPT…NLFSPLQNVR (232 aa)). The interval 246 to 318 (KMTEVLVEEL…HLPKEKFTKD (73 aa)) is alpha C-terminal domain (alpha-CTD).

This sequence belongs to the RNA polymerase alpha chain family. As to quaternary structure, in plastids the minimal PEP RNA polymerase catalytic core is composed of four subunits: alpha, beta, beta', and beta''. When a (nuclear-encoded) sigma factor is associated with the core the holoenzyme is formed, which can initiate transcription.

It is found in the plastid. It localises to the chloroplast. The catalysed reaction is RNA(n) + a ribonucleoside 5'-triphosphate = RNA(n+1) + diphosphate. Its function is as follows. DNA-dependent RNA polymerase catalyzes the transcription of DNA into RNA using the four ribonucleoside triphosphates as substrates. This is DNA-directed RNA polymerase subunit alpha from Chlorokybus atmophyticus (Soil alga).